The chain runs to 235 residues: Ubiquinone/menaquinone biosynthesis C-methyltransferase UbiE (235 aa).

Thr-60, Asp-81, and Ser-126 together coordinate S-adenosyl-L-methionine.

Belongs to the class I-like SAM-binding methyltransferase superfamily. MenG/UbiE family.

The catalysed reaction is a 2-demethylmenaquinol + S-adenosyl-L-methionine = a menaquinol + S-adenosyl-L-homocysteine + H(+). The enzyme catalyses a 2-methoxy-6-(all-trans-polyprenyl)benzene-1,4-diol + S-adenosyl-L-methionine = a 5-methoxy-2-methyl-3-(all-trans-polyprenyl)benzene-1,4-diol + S-adenosyl-L-homocysteine + H(+). It functions in the pathway quinol/quinone metabolism; menaquinone biosynthesis; menaquinol from 1,4-dihydroxy-2-naphthoate: step 2/2. Its pathway is cofactor biosynthesis; ubiquinone biosynthesis. In terms of biological role, methyltransferase required for the conversion of demethylmenaquinol (DMKH2) to menaquinol (MKH2) and the conversion of 2-polyprenyl-6-methoxy-1,4-benzoquinol (DDMQH2) to 2-polyprenyl-3-methyl-6-methoxy-1,4-benzoquinol (DMQH2). In Citrifermentans bemidjiense (strain ATCC BAA-1014 / DSM 16622 / JCM 12645 / Bem) (Geobacter bemidjiensis), this protein is Ubiquinone/menaquinone biosynthesis C-methyltransferase UbiE.